A 255-amino-acid polypeptide reads, in one-letter code: Diphthine synthase (255 aa).

Residues L9, D85, V88, 113–114 (SI), L164, A207, and H232 each bind S-adenosyl-L-methionine.

This sequence belongs to the diphthine synthase family. Homodimer.

The catalysed reaction is 2-[(3S)-amino-3-carboxypropyl]-L-histidyl-[translation elongation factor 2] + 3 S-adenosyl-L-methionine = diphthine-[translation elongation factor 2] + 3 S-adenosyl-L-homocysteine + 3 H(+). Its pathway is protein modification; peptidyl-diphthamide biosynthesis. Functionally, S-adenosyl-L-methionine-dependent methyltransferase that catalyzes the trimethylation of the amino group of the modified target histidine residue in translation elongation factor 2 (EF-2), to form an intermediate called diphthine. The three successive methylation reactions represent the second step of diphthamide biosynthesis. This chain is Diphthine synthase, found in Methanococcus maripaludis (strain C7 / ATCC BAA-1331).